The chain runs to 292 residues: MKQRTIKRPVEAIGIGLHKGVPVKLRLEPMAEDSGIVFYRSDKGVSIPLSPDYVVDTKMATVIGNEGVMVSTIEHLMSAIYAFGIDNLRIIVDNDEVPIMDGSAISFVMMIEEAGIKELEAPKKFIKITKEVEIKDGDKFAKLKPNEKISFDFEINFDHPVIGNQKYMFNFSTKNYIEEIARARTFGFLKEVQYLRSIGLALGGSLENAIVLDDKKILNDSLRFEDEFVRHKILDAIGDMSLLGGNFIGSYEAFASGHHLNHLLTKELVAQEAFEIVTFEKEGEKAVAKAFS.

Residues histidine 75, histidine 231, and aspartate 235 each contribute to the Zn(2+) site. The active-site Proton donor is the histidine 258.

It belongs to the LpxC family. Zn(2+) is required as a cofactor.

The enzyme catalyses a UDP-3-O-[(3R)-3-hydroxyacyl]-N-acetyl-alpha-D-glucosamine + H2O = a UDP-3-O-[(3R)-3-hydroxyacyl]-alpha-D-glucosamine + acetate. The protein operates within glycolipid biosynthesis; lipid IV(A) biosynthesis; lipid IV(A) from (3R)-3-hydroxytetradecanoyl-[acyl-carrier-protein] and UDP-N-acetyl-alpha-D-glucosamine: step 2/6. In terms of biological role, catalyzes the hydrolysis of UDP-3-O-myristoyl-N-acetylglucosamine to form UDP-3-O-myristoylglucosamine and acetate, the committed step in lipid A biosynthesis. The chain is UDP-3-O-acyl-N-acetylglucosamine deacetylase from Nautilia profundicola (strain ATCC BAA-1463 / DSM 18972 / AmH).